The sequence spans 409 residues: Divalent metal cation transporter MntH (409 aa).

The next 11 membrane-spanning stretches (helical) occupy residues 19–39 (LSLM…GNFA), 46–66 (ATFG…AMLV), 98–118 (WVQA…GAAI), 122–142 (LLFG…TFLI), 155–175 (LVIG…LIFS), 196–216 (AVFL…IYLH), 241–261 (IAMT…AAAF), 290–310 (VFGL…TLAG), 320–340 (FYIP…IVIL), 348–368 (ILVM…VPLL), and 388–408 (ILGK…LISL).

The protein belongs to the NRAMP family.

Its subcellular location is the cell inner membrane. Its function is as follows. H(+)-stimulated, divalent metal cation uptake system. This Yersinia pseudotuberculosis serotype O:1b (strain IP 31758) protein is Divalent metal cation transporter MntH.